The sequence spans 233 residues: Purine nucleoside phosphorylase DeoD-type (233 aa).

H4 contributes to the a purine D-ribonucleoside binding site. Phosphate is bound by residues G20, R24, R43, and 87-90 (RIGT). A purine D-ribonucleoside contacts are provided by residues 179–181 (EME) and 203–204 (SD). Residue D204 is the Proton donor of the active site.

Belongs to the PNP/UDP phosphorylase family. In terms of assembly, homohexamer; trimer of homodimers.

It carries out the reaction a purine D-ribonucleoside + phosphate = a purine nucleobase + alpha-D-ribose 1-phosphate. The catalysed reaction is a purine 2'-deoxy-D-ribonucleoside + phosphate = a purine nucleobase + 2-deoxy-alpha-D-ribose 1-phosphate. In terms of biological role, catalyzes the reversible phosphorolytic breakdown of the N-glycosidic bond in the beta-(deoxy)ribonucleoside molecules, with the formation of the corresponding free purine bases and pentose-1-phosphate. In Helicobacter acinonychis (strain Sheeba), this protein is Purine nucleoside phosphorylase DeoD-type.